Reading from the N-terminus, the 494-residue chain is Guanosine-5'-triphosphate,3'-diphosphate pyrophosphatase (494 aa).

It belongs to the GppA/Ppx family. GppA subfamily.

The enzyme catalyses guanosine 3'-diphosphate 5'-triphosphate + H2O = guanosine 3',5'-bis(diphosphate) + phosphate + H(+). Its pathway is purine metabolism; ppGpp biosynthesis; ppGpp from GTP: step 2/2. Functionally, catalyzes the conversion of pppGpp to ppGpp. Guanosine pentaphosphate (pppGpp) is a cytoplasmic signaling molecule which together with ppGpp controls the 'stringent response', an adaptive process that allows bacteria to respond to amino acid starvation, resulting in the coordinated regulation of numerous cellular activities. The chain is Guanosine-5'-triphosphate,3'-diphosphate pyrophosphatase from Citrobacter koseri (strain ATCC BAA-895 / CDC 4225-83 / SGSC4696).